A 394-amino-acid polypeptide reads, in one-letter code: 1-deoxy-D-xylulose 5-phosphate reductoisomerase (394 aa).

NADPH-binding residues include Thr-10, Gly-11, Ser-12, Ile-13, Gly-38, Arg-39, Asn-40, and Asn-123. Lys-124 provides a ligand contact to 1-deoxy-D-xylulose 5-phosphate. Residue Glu-125 participates in NADPH binding. Asp-149 contacts Mn(2+). 1-deoxy-D-xylulose 5-phosphate is bound by residues Ser-150, Glu-151, Ser-175, and His-198. Residue Glu-151 coordinates Mn(2+). Gly-204 lines the NADPH pocket. Residues Ser-211, Asn-216, Lys-217, and Glu-220 each contribute to the 1-deoxy-D-xylulose 5-phosphate site. Glu-220 contributes to the Mn(2+) binding site.

It belongs to the DXR family. Mg(2+) is required as a cofactor. Mn(2+) serves as cofactor.

The enzyme catalyses 2-C-methyl-D-erythritol 4-phosphate + NADP(+) = 1-deoxy-D-xylulose 5-phosphate + NADPH + H(+). It functions in the pathway isoprenoid biosynthesis; isopentenyl diphosphate biosynthesis via DXP pathway; isopentenyl diphosphate from 1-deoxy-D-xylulose 5-phosphate: step 1/6. In terms of biological role, catalyzes the NADPH-dependent rearrangement and reduction of 1-deoxy-D-xylulose-5-phosphate (DXP) to 2-C-methyl-D-erythritol 4-phosphate (MEP). The protein is 1-deoxy-D-xylulose 5-phosphate reductoisomerase of Cereibacter sphaeroides (strain ATCC 17029 / ATH 2.4.9) (Rhodobacter sphaeroides).